The following is a 32-amino-acid chain: Cytochrome b6-f complex subunit 7 (32 aa).

Residues 9 to 27 form a helical membrane-spanning segment; it reads AAVFWILIPIGLVGGALLL.

The protein belongs to the PetM family. As to quaternary structure, the 4 large subunits of the cytochrome b6-f complex are cytochrome b6, subunit IV (17 kDa polypeptide, PetD), cytochrome f and the Rieske protein, while the 4 small subunits are PetG, PetL, PetM and PetN. The complex functions as a dimer.

The protein resides in the cellular thylakoid membrane. In terms of biological role, component of the cytochrome b6-f complex, which mediates electron transfer between photosystem II (PSII) and photosystem I (PSI), cyclic electron flow around PSI, and state transitions. The polypeptide is Cytochrome b6-f complex subunit 7 (Prochlorococcus marinus (strain MIT 9515)).